The sequence spans 351 residues: tRNA pseudouridine synthase D (351 aa).

Asp-81 serves as the catalytic Nucleophile. In terms of domain architecture, TRUD spans 158 to 304 (GVPNYFGSQR…MRHERRAIEL (147 aa)).

It belongs to the pseudouridine synthase TruD family.

It catalyses the reaction uridine(13) in tRNA = pseudouridine(13) in tRNA. Its function is as follows. Responsible for synthesis of pseudouridine from uracil-13 in transfer RNAs. This Aliivibrio fischeri (strain MJ11) (Vibrio fischeri) protein is tRNA pseudouridine synthase D.